A 546-amino-acid chain; its full sequence is Chaperonin GroEL (546 aa).

ATP-binding positions include 29 to 32, K50, 86 to 90, G414, 477 to 479, and D493; these read TLGP, DGTTT, and NAL.

This sequence belongs to the chaperonin (HSP60) family. In terms of assembly, forms a cylinder of 14 subunits composed of two heptameric rings stacked back-to-back. Interacts with the co-chaperonin GroES.

The protein localises to the cytoplasm. The catalysed reaction is ATP + H2O + a folded polypeptide = ADP + phosphate + an unfolded polypeptide.. Together with its co-chaperonin GroES, plays an essential role in assisting protein folding. The GroEL-GroES system forms a nano-cage that allows encapsulation of the non-native substrate proteins and provides a physical environment optimized to promote and accelerate protein folding. This chain is Chaperonin GroEL, found in Leptospira interrogans serogroup Icterohaemorrhagiae serovar Lai (strain 56601).